The primary structure comprises 208 residues: Putative thymidylate kinase (208 aa).

Positions 8–15 (GIDGSGVS) are defective ATP-binding.

Belongs to the thymidylate kinase family.

The catalysed reaction is dTMP + ATP = dTDP + ADP. This is Putative thymidylate kinase (tmk) from Aeropyrum pernix (strain ATCC 700893 / DSM 11879 / JCM 9820 / NBRC 100138 / K1).